A 137-amino-acid polypeptide reads, in one-letter code: F420H(2)-dependent biliverdin reductase (137 aa).

Coenzyme F420-(gamma-Glu)n contacts are provided by residues 36–41 (HVVAVG), 54–55 (IT), 60–61 (QK), arginine 67, and 78–81 (GARW).

Belongs to the F420H(2)-dependent biliverdin reductase family. In terms of assembly, homodimer.

The protein localises to the cell surface. It localises to the secreted. The catalysed reaction is (4Z,15Z)-bilirubin IXalpha + oxidized coenzyme F420-(gamma-L-Glu)(n) + H(+) = biliverdin IXalpha + reduced coenzyme F420-(gamma-L-Glu)(n). Functionally, catalyzes the F420H(2)-dependent reduction of biliverdin-IXalpha at C10 position, leading to bilirubin-IXalpha, a potent antioxidant. As biliverdin-IXalpha is produced in high amounts in macrophages infected with M.tuberculosis, its reduction by Rv2074 may play a role in protecting mycobacteria against oxidative stress, aiding the persistence of M.tuberculosis infection. The polypeptide is F420H(2)-dependent biliverdin reductase (Mycobacterium tuberculosis (strain CDC 1551 / Oshkosh)).